Reading from the N-terminus, the 158-residue chain is Transcription elongation factor GreA (158 aa).

Belongs to the GreA/GreB family.

In terms of biological role, necessary for efficient RNA polymerase transcription elongation past template-encoded arresting sites. The arresting sites in DNA have the property of trapping a certain fraction of elongating RNA polymerases that pass through, resulting in locked ternary complexes. Cleavage of the nascent transcript by cleavage factors such as GreA or GreB allows the resumption of elongation from the new 3'terminus. GreA releases sequences of 2 to 3 nucleotides. This Verminephrobacter eiseniae (strain EF01-2) protein is Transcription elongation factor GreA.